A 215-amino-acid polypeptide reads, in one-letter code: uncharacterized protein (215 aa).

Catalysis depends on charge relay system residues S114, D162, and H194.

This sequence belongs to the AB hydrolase superfamily. AB hydrolase 2 family.

This is an uncharacterized protein from Rickettsia prowazekii (strain Madrid E).